Consider the following 172-residue polypeptide: Translation initiation factor IF-3 (172 aa).

Belongs to the IF-3 family. Monomer.

The protein resides in the cytoplasm. Functionally, IF-3 binds to the 30S ribosomal subunit and shifts the equilibrium between 70S ribosomes and their 50S and 30S subunits in favor of the free subunits, thus enhancing the availability of 30S subunits on which protein synthesis initiation begins. The chain is Translation initiation factor IF-3 from Bartonella tribocorum (strain CIP 105476 / IBS 506).